Reading from the N-terminus, the 343-residue chain is Dimethyladenosine transferase 1, mitochondrial (343 aa).

Residues 28–31 (QNFL), asparagine 29, leucine 31, glycine 56, glutamate 78, aspartate 133, and asparagine 169 contribute to the S-adenosyl-L-methionine site.

It belongs to the class I-like SAM-binding methyltransferase superfamily. rRNA adenine N(6)-methyltransferase family. KsgA subfamily.

The protein localises to the mitochondrion. Its function is as follows. Probable S-adenosyl-L-methionine-dependent methyltransferase which specifically dimethylates mitochondrial 12S rRNA at the conserved stem loop. Also required for basal transcription of mitochondrial DNA. Stimulates transcription independently of the methyltransferase activity. The protein is Dimethyladenosine transferase 1, mitochondrial of Vermamoeba vermiformis (Amoeba).